Reading from the N-terminus, the 823-residue chain is Axial budding pattern protein 2 (823 aa).

A signal peptide spans Met-1–Ala-22. Topologically, residues Thr-23–Ala-508 are extracellular. 16 N-linked (GlcNAc...) asparagine glycosylation sites follow: Asn-41, Asn-50, Asn-96, Asn-117, Asn-163, Asn-260, Asn-266, Asn-304, Asn-324, Asn-359, Asn-382, Asn-389, Asn-403, Asn-447, Asn-451, and Asn-495. The interval Asn-447 to Tyr-467 is disordered. Over residues Ser-449–Tyr-467 the composition is skewed to low complexity. The chain crosses the membrane as a helical span at residues Cys-509 to Trp-529. The Cytoplasmic segment spans residues Arg-530–Leu-823. Disordered regions lie at residues Glu-539–Tyr-576 and His-596–Ser-627. 2 stretches are compositionally biased toward polar residues: residues Asn-552–Asn-566 and Ser-614–Gln-626. Phosphoserine is present on residues Ser-642, Ser-673, and Ser-676. Disordered stretches follow at residues Pro-700–Ser-734 and Asp-751–Asp-771. A compositionally biased stretch (polar residues) spans Asp-709 to Pro-724. The span at Thr-760–Ser-769 shows a compositional bias: low complexity.

In terms of assembly, interacts with BEM1, BUD3, BUD4, BUD5, CDC24 and CDC42. O-glycosylated by PMT4 and N-glycosylated. O-glycosylation increases activity in daughter cells by enhancing stability and promoting localization to the plasma membrane. May also be O-glycosylated by PMT1 and PMT2.

The protein localises to the cell membrane. Functionally, required for haploid cells axial budding pattern. Acts as an anchor to help direct new growth components and/or polarity establishment components like the BUD5 GTP/GDP exchange factor to localize at the cortical axial budding site. Regulates septin organization in late G1 independently of its role in polarity-axis determination. The polypeptide is Axial budding pattern protein 2 (AXL2) (Saccharomyces cerevisiae (strain ATCC 204508 / S288c) (Baker's yeast)).